Here is a 792-residue protein sequence, read N- to C-terminus: uncharacterized protein (792 aa).

25 repeat units span residues 91–102, 103–114, 115–126, 127–138, 139–150, 151–162, 163–174, 175–186, 187–198, 199–210, 211–222, 223–234, 235–246, 247–258, 259–270, 271–282, 283–294, 295–306, 307–318, 319–330, 331–342, 343–354, 355–366, 367–378, and 379–390. Residues 91–390 form a 25 X 12 AA tandem repeat of N-[SV]-[RS]-T-[NS]-A-T-T-T-[AE]-[ST]-[IT] region; sequence NSSTNATTTA…STNATTTEST (300 aa). The tract at residues 113 to 417 is disordered; sequence SINVRTSATT…RFHPVTDINK (305 aa). Residues 118-393 show a composition bias toward low complexity; it reads TSATTTESTN…ATTTESTNAS (276 aa). Positions 394–417 are enriched in basic and acidic residues; the sequence is AKEDANKDGNAEDNRFHPVTDINK.

This is an uncharacterized protein from Saccharomyces cerevisiae (strain ATCC 204508 / S288c) (Baker's yeast).